The primary structure comprises 347 residues: Protein RecA (347 aa).

An ATP-binding site is contributed by 64–71 (GPESSGKT).

It belongs to the RecA family.

Its subcellular location is the cytoplasm. Its function is as follows. Can catalyze the hydrolysis of ATP in the presence of single-stranded DNA, the ATP-dependent uptake of single-stranded DNA by duplex DNA, and the ATP-dependent hybridization of homologous single-stranded DNAs. It interacts with LexA causing its activation and leading to its autocatalytic cleavage. This chain is Protein RecA, found in Bartonella bacilliformis (strain ATCC 35685 / KC583 / Herrer 020/F12,63).